The following is a 310-amino-acid chain: Putative carbonic anhydrase 5 (310 aa).

A signal peptide spans 1 to 20 (MPSHLLVLSLLVALLVVVSC). Residues 26–280 (HGWGYDENNG…LNGRRIQYRP (255 aa)) form the Alpha-carbonic anhydrase domain. Zn(2+)-binding residues include H117, H119, and H142. A substrate-binding site is contributed by 223 to 224 (TT).

The protein belongs to the alpha-carbonic anhydrase family.

The protein localises to the secreted. It catalyses the reaction hydrogencarbonate + H(+) = CO2 + H2O. Reversible hydration of carbon dioxide. This chain is Putative carbonic anhydrase 5 (cah-5), found in Caenorhabditis elegans.